We begin with the raw amino-acid sequence, 396 residues long: Smad nuclear-interacting protein 1 (396 aa).

Residues 1–10 (MKAVKSERER) show a composition bias toward basic and acidic residues. The disordered stretch occupies residues 1–227 (MKAVKSERER…VPAKEKPSFE (227 aa)). A Glycyl lysine isopeptide (Lys-Gly) (interchain with G-Cter in SUMO); alternate cross-link involves residue lysine 30. Lysine 30 participates in a covalent cross-link: Glycyl lysine isopeptide (Lys-Gly) (interchain with G-Cter in SUMO1); alternate. Lysine 30 participates in a covalent cross-link: Glycyl lysine isopeptide (Lys-Gly) (interchain with G-Cter in SUMO2); alternate. 4 positions are modified to phosphoserine: serine 35, serine 49, serine 52, and serine 54. Threonine 57 carries the phosphothreonine modification. A phosphoserine mark is found at serine 58 and serine 99. A compositionally biased stretch (basic residues) spans 77 to 105 (PPKKKNKASGRRSKSPRSKRNRSPHHSTV). Positions 107–142 (VKQEREDHPRRGREDRQHREPSEQEHRRARNSDRDR) are enriched in basic and acidic residues. Residue lysine 108 forms a Glycyl lysine isopeptide (Lys-Gly) (interchain with G-Cter in SUMO2) linkage. Serine 153 carries the post-translational modification Phosphoserine. Positions 165-196 (RDRDTQNLQAQEEEREFYNARRREHRQRNDVG) form a coiled coil. Residue serine 202 is modified to Phosphoserine. Residues 213–225 (NKEKEVPAKEKPS) are compositionally biased toward basic and acidic residues. Lysine 223 participates in a covalent cross-link: Glycyl lysine isopeptide (Lys-Gly) (interchain with G-Cter in SUMO2). The FHA domain occupies 281–344 (YLLGRHRRIA…NGTFLNNKRI (64 aa)). The span at 373–382 (SSDTSEIDRK) shows a compositional bias: basic and acidic residues. Positions 373–396 (SSDTSEIDRKDDEDEEEEEEVSDS) are disordered. The segment covering 383 to 396 (DDEDEEEEEEVSDS) has biased composition (acidic residues). Serine 394 carries the post-translational modification Phosphoserine.

In terms of assembly, component of activated spliceosome complexes. Component of the minor spliceosome, which splices U12-type introns. Binds SMAD4 and CREBBP/EP300. Binds the SMAD1/OAZ1/PSMB4 complex. Interacts with DROSHA and SMARCA4. Component of the SNARP complex which consists at least of SNIP1, SNW1, THRAP3, BCLAF1 and PNN. Degraded by the proteasome upon binding to the SMAD1/OAZ1/PSMB4 complex. As to expression, ubiquitous, with highest expression in heart and skeletal muscle.

It localises to the nucleus. Functionally, required for pre-mRNA splicing as component of the spliceosome. As a component of the minor spliceosome, involved in the splicing of U12-type introns in pre-mRNAs. Down-regulates NF-kappa-B signaling by competing with RELA for CREBBP/EP300 binding. Involved in the microRNA (miRNA) biogenesis. May be involved in cyclin-D1/CCND1 mRNA stability through the SNARP complex which associates with both the 3'end of the CCND1 gene and its mRNA. This chain is Smad nuclear-interacting protein 1 (SNIP1), found in Homo sapiens (Human).